We begin with the raw amino-acid sequence, 697 residues long: Putative cryptochrome DASH (697 aa).

In terms of domain architecture, Photolyase/cryptochrome alpha/beta spans 5–164; sequence KLLVYLLRRD…GFKLWHDEKY (160 aa). Disordered stretches follow at residues 170–215 and 554–697; these read DNGL…FPSW and FSVT…PPHI. The segment covering 188–198 has biased composition (basic and acidic residues); that stretch reads KTQEPLRERPR. Residues 560–569 show a composition bias toward basic residues; that stretch reads RGNRRPYRWR. A compositionally biased stretch (gly residues) spans 578–590; the sequence is GRGGRGGGTGNTS. Low complexity-rich tracts occupy residues 659 to 675 and 683 to 697; these read QQQQQPQHQLQHYYAHQ and RQQQQQFYHQIPPHI.

The protein belongs to the DNA photolyase class-1 family. FAD serves as cofactor. Requires (6R)-5,10-methylene-5,6,7,8-tetrahydrofolate as cofactor.

May have a photoreceptor function. The protein is Putative cryptochrome DASH of Gibberella zeae (strain ATCC MYA-4620 / CBS 123657 / FGSC 9075 / NRRL 31084 / PH-1) (Wheat head blight fungus).